The primary structure comprises 115 residues: Large ribosomal subunit protein bL21 (115 aa).

The protein belongs to the bacterial ribosomal protein bL21 family. In terms of assembly, part of the 50S ribosomal subunit. Contacts protein L20.

Functionally, this protein binds to 23S rRNA in the presence of protein L20. This is Large ribosomal subunit protein bL21 from Picosynechococcus sp. (strain ATCC 27264 / PCC 7002 / PR-6) (Agmenellum quadruplicatum).